The chain runs to 312 residues: Formimidoylglutamase (312 aa).

Positions 128, 153, 155, 157, 240, and 242 each coordinate Mn(2+).

This sequence belongs to the arginase family. Mn(2+) serves as cofactor.

The enzyme catalyses N-formimidoyl-L-glutamate + H2O = formamide + L-glutamate. It participates in amino-acid degradation; L-histidine degradation into L-glutamate; L-glutamate from N-formimidoyl-L-glutamate (hydrolase route): step 1/1. Catalyzes the conversion of N-formimidoyl-L-glutamate to L-glutamate and formamide. The chain is Formimidoylglutamase from Enterobacter sp. (strain 638).